Reading from the N-terminus, the 195-residue chain is uncharacterized protein (195 aa).

Residues 143-195 are disordered; the sequence is NKLIETINTNRTNNTDNKSTKSKKQTETKKSLRTNKIVKQPINKSKKNIREEY. Positions 148-159 are enriched in low complexity; it reads TINTNRTNNTDN.

This is an uncharacterized protein from Acanthamoeba polyphaga (Amoeba).